A 438-amino-acid chain; its full sequence is Thymidine phosphorylase (438 aa).

It belongs to the thymidine/pyrimidine-nucleoside phosphorylase family. Homodimer.

It carries out the reaction thymidine + phosphate = 2-deoxy-alpha-D-ribose 1-phosphate + thymine. The protein operates within pyrimidine metabolism; dTMP biosynthesis via salvage pathway; dTMP from thymine: step 1/2. In terms of biological role, the enzymes which catalyze the reversible phosphorolysis of pyrimidine nucleosides are involved in the degradation of these compounds and in their utilization as carbon and energy sources, or in the rescue of pyrimidine bases for nucleotide synthesis. The chain is Thymidine phosphorylase from Colwellia psychrerythraea (strain 34H / ATCC BAA-681) (Vibrio psychroerythus).